Here is a 527-residue protein sequence, read N- to C-terminus: Putative zinc finger CCCH domain-containing protein 64 (527 aa).

A disordered region spans residues 103 to 127 (GQLRSTQTTSKRKAASRKGQREQRV). A C3H1-type zinc finger spans residues 213-241 (RPGEPFCRYYMKFGECKHMTFCKYNHPKD).

The protein is Putative zinc finger CCCH domain-containing protein 64 of Oryza sativa subsp. japonica (Rice).